Consider the following 221-residue polypeptide: Adenylate kinase (221 aa).

Position 10–15 (10–15) interacts with ATP; the sequence is GAGKGT. The segment at 30–59 is NMP; it reads STGDMLRAAVKAGTPLGLEAKRYMDAGELV. Residues threonine 31, arginine 36, 57–59, 85–88, and glutamine 92 each bind AMP; these read ELV and GFPR. The segment at 122–159 is LID; sequence GRRMHPASGRTYHVKFNPPKVEGVDDVTGEPLIQRDDD. Residues arginine 123 and 132–133 each bind ATP; that span reads TY. Residues arginine 156 and arginine 167 each coordinate AMP. Residue glycine 207 coordinates ATP.

Belongs to the adenylate kinase family. In terms of assembly, monomer.

It is found in the cytoplasm. The catalysed reaction is AMP + ATP = 2 ADP. It participates in purine metabolism; AMP biosynthesis via salvage pathway; AMP from ADP: step 1/1. Its function is as follows. Catalyzes the reversible transfer of the terminal phosphate group between ATP and AMP. Plays an important role in cellular energy homeostasis and in adenine nucleotide metabolism. This chain is Adenylate kinase, found in Paraburkholderia phymatum (strain DSM 17167 / CIP 108236 / LMG 21445 / STM815) (Burkholderia phymatum).